The sequence spans 620 residues: 1-deoxy-D-xylulose-5-phosphate synthase (620 aa).

Residues histidine 80 and 121 to 123 (GHS) contribute to the thiamine diphosphate site. Mg(2+) is bound at residue aspartate 152. Thiamine diphosphate contacts are provided by residues 153-154 (GA), asparagine 181, tyrosine 288, and glutamate 370. Asparagine 181 contacts Mg(2+).

The protein belongs to the transketolase family. DXPS subfamily. Homodimer. It depends on Mg(2+) as a cofactor. Thiamine diphosphate serves as cofactor.

It catalyses the reaction D-glyceraldehyde 3-phosphate + pyruvate + H(+) = 1-deoxy-D-xylulose 5-phosphate + CO2. Its pathway is metabolic intermediate biosynthesis; 1-deoxy-D-xylulose 5-phosphate biosynthesis; 1-deoxy-D-xylulose 5-phosphate from D-glyceraldehyde 3-phosphate and pyruvate: step 1/1. In terms of biological role, catalyzes the acyloin condensation reaction between C atoms 2 and 3 of pyruvate and glyceraldehyde 3-phosphate to yield 1-deoxy-D-xylulose-5-phosphate (DXP). This is 1-deoxy-D-xylulose-5-phosphate synthase from Escherichia coli O6:K15:H31 (strain 536 / UPEC).